Reading from the N-terminus, the 117-residue chain is Small nuclear ribonucleoprotein Sm D1 (117 aa).

Residues Lys-2 to Leu-74 enclose the Sm domain. The disordered stretch occupies residues Ile-81–Phe-117. Positions Pro-87–Phe-117 are enriched in basic residues.

Belongs to the snRNP core protein family. As to quaternary structure, belongs to the 40S cdc5-associated complex (or cwf complex), a spliceosome sub-complex reminiscent of a late-stage spliceosome composed of the U2, U5 and U6 snRNAs and at least brr2, cdc5, cwf2/prp3, cwf3/syf1, cwf4/syf3, cwf5/ecm2, spp42/cwf6, cwf7/spf27, cwf8, cwf9, cwf10, cwf11, cwf12, prp45/cwf13, cwf14, cwf15, cwf16, cwf17, cwf18, cwf19, cwf20, cwf21, cwf22, cwf23, cwf24, cwf25, cwf26, cyp7/cwf27, cwf28, cwf29/ist3, lea1, msl1, prp5/cwf1, prp10, prp12/sap130, prp17, prp22, sap61, sap62, sap114, sap145, slu7, smb1, smd1, smd3, smf1, smg1 and syf2. Interacts with saf5; the interaction is direct.

The protein resides in the nucleus. It is found in the cytoplasm. In terms of biological role, plays a role in pre-mRNA splicing as a core component of the spliceosomal U1, U2, U4 and U5 small nuclear ribonucleoproteins (snRNPs), the building blocks of the spliceosome. The protein is Small nuclear ribonucleoprotein Sm D1 (smd1) of Schizosaccharomyces pombe (strain 972 / ATCC 24843) (Fission yeast).